We begin with the raw amino-acid sequence, 136 residues long: Small ribosomal subunit protein eS6 (136 aa).

This sequence belongs to the eukaryotic ribosomal protein eS6 family.

In Methanosarcina acetivorans (strain ATCC 35395 / DSM 2834 / JCM 12185 / C2A), this protein is Small ribosomal subunit protein eS6.